Here is a 193-residue protein sequence, read N- to C-terminus: Allatostatin A (193 aa).

The first 25 residues, 1–25 (MKTSSLIAMRLIIFYLLSVVGRSTA), serve as a signal peptide directing secretion. The propeptide occupies 26-64 (AVEEAPASSLHIPRLNPLSSNLEYDEPSEKRAYAYISEY). Isoleucine 74 carries the isoleucine amide modification. A propeptide spanning residues 78-84 (WIDNSED) is cleaved from the precursor. Isoleucine 94 and isoleucine 105 each carry isoleucine amide. A propeptide spanning residues 109–139 (NSGYRPLGMDFSVDNMDFHSREDNLDDFIDD) is cleaved from the precursor. Position 150 is an isoleucine amide (isoleucine 150). Serine 165 is modified (serine amide). The propeptide occupies 169–193 (LNDVVGPKYLLGLGKGLSENENLIQ).

The protein belongs to the allatostatin family. As to expression, allatostatins A1, A2 and A3 are expressed in brain, antennal lobes, optical lobes, gnathal ganglia, the retrocerebral complex and thoracic, abdominal and ventral ganglia. Allatostain A4 is expressed in brain (at protein level).

It localises to the secreted. Its function is as follows. May act as a neurotransmitter or neuromodulator. The chain is Allatostatin A from Camponotus floridanus (Florida carpenter ant).